The primary structure comprises 77 residues: U9-lycotoxin-Ls1a (77 aa).

The first 20 residues, 1-20 (MKLLLFTALVLVVIVSLIEA), serve as a signal peptide directing secretion. A propeptide spanning residues 21-26 (EAENER) is cleaved from the precursor.

Belongs to the neurotoxin 19 (CSTX) family. 08 (U8-Lctx) subfamily. Post-translationally, contains 4 disulfide bonds. As to expression, expressed by the venom gland.

The protein localises to the secreted. The protein is U9-lycotoxin-Ls1a of Lycosa singoriensis (Wolf spider).